We begin with the raw amino-acid sequence, 366 residues long: MPDPRDLQLSSYDYPLPPERIAQAPVEPRHSARLLMVPPQGEPSTDAAHGQVWDLLEQLQPGDLLVVNDTRVLKARLAVRRSGGGLSELLVLEPRGEGRWLCLARPAKRMRPGDILTIDGSTSISLTVLAEDPASGGRLVQFPSDCRDAETIEGLLNDVGEVPLPPYIERHDPSDSQRYQTRYADRPGAVAAPTAGLHFSDELLAGLQQKGVDLARITLHVGLGTFRPVETEDLTALELHSEWVDVSPAVVEAVQACRGRVIAVGTTSVRALEGAAQAHGGVLKPYTGPVDLVIQPGYRFAVVQGLLTNFHLPKSSLLLLVSALIGREKLLELYHEAIERDYRFFSYGDAMWIAPEVVLPEVQPRP.

Belongs to the QueA family. In terms of assembly, monomer.

It localises to the cytoplasm. The catalysed reaction is 7-aminomethyl-7-carbaguanosine(34) in tRNA + S-adenosyl-L-methionine = epoxyqueuosine(34) in tRNA + adenine + L-methionine + 2 H(+). It functions in the pathway tRNA modification; tRNA-queuosine biosynthesis. Functionally, transfers and isomerizes the ribose moiety from AdoMet to the 7-aminomethyl group of 7-deazaguanine (preQ1-tRNA) to give epoxyqueuosine (oQ-tRNA). This Synechococcus sp. (strain CC9605) protein is S-adenosylmethionine:tRNA ribosyltransferase-isomerase.